The sequence spans 338 residues: Methionine import ATP-binding protein MetN 2 (338 aa).

Positions 2 to 242 (IEIEKVCVDF…PQHAFTQQLV (241 aa)) constitute an ABC transporter domain. 39-46 (GTSGAGKS) contacts ATP.

It belongs to the ABC transporter superfamily. Methionine importer (TC 3.A.1.24) family. In terms of assembly, the complex is composed of two ATP-binding proteins (MetN), two transmembrane proteins (MetI) and a solute-binding protein (MetQ).

The protein localises to the cell inner membrane. The catalysed reaction is L-methionine(out) + ATP + H2O = L-methionine(in) + ADP + phosphate + H(+). It carries out the reaction D-methionine(out) + ATP + H2O = D-methionine(in) + ADP + phosphate + H(+). Its function is as follows. Part of the ABC transporter complex MetNIQ involved in methionine import. Responsible for energy coupling to the transport system. The sequence is that of Methionine import ATP-binding protein MetN 2 from Salmonella choleraesuis (strain SC-B67).